Consider the following 494-residue polypeptide: MAVWQQQGQRLYFPPNPVTKVLCTESYVKRTSIFYHGETERLLTVGHPYWKIPEQNIPKVSGNQYRVFRVQLPDPNQFALPDKNLHNPAKERLVWAILGLQVSRGQPLGAPVTGNQLFNVWTDAENVTAKRALPGSDDRKQLGMDVKQTQMLLIGQSPAIGEYWGKAIPCEGKQPKAGDCPPIELKNKPIEDGDMMDIGFGACDWKDFSQNLSDVPLDLINSKSLYPDYLKMAEDSLGNSCFFYARREQVYVRHVYSRGGEQKEAIPKDMTLPQQVPDNKDTSFTFMGTPSGSLVSTDGQLFNRPYWLYQAQGLNNGVCWDNELFITVGDNSRGGVFTISVPVDDRKPEQYNSANMNIYCRHVEEYKLAVILELCSVELTSETVAYLQTVNPSVLEKWEVGVNPPPATVLEDTYRYQESKAIKCIDQTAAAKKDKYENLSFWNIDLREKLSADLDQYPLGRRFLAQNGITCSRKRLRPASTKKSTTNKKRKTSR.

A disordered region spans residues 475–494; sequence RLRPASTKKSTTNKKRKTSR. The segment covering 485–494 has biased composition (basic residues); that stretch reads TTNKKRKTSR.

Belongs to the papillomaviridae L1 protein family. As to quaternary structure, self-assembles into homopentamers. The capsid has an icosahedral symmetry and consists of 72 capsomers, with each capsomer being a pentamer of L1. Interacts with the minor capsid protein L2; this interaction is necessary for viral genome encapsidation. Interacts with protein E2; this interaction enhances E2-dependent replication and transcription activation.

The protein resides in the virion. Its subcellular location is the host nucleus. Its function is as follows. Forms an icosahedral capsid with a T=7 symmetry and a 50 nm diameter. The capsid is composed of 72 pentamers linked to each other by disulfide bonds and associated with L2 proteins. Binds to heparan sulfate proteoglycans on cell surface of basal layer keratinocytes to provide initial virion attachment. This binding mediates a conformational change in the virus capsid that facilitates efficient infection. The virion enters the host cell via endocytosis. During virus trafficking, L1 protein dissociates from the viral DNA and the genomic DNA is released to the host nucleus. The virion assembly takes place within the cell nucleus. Encapsulates the genomic DNA together with protein L2. This Bovine papillomavirus type 5 protein is Major capsid protein L1.